We begin with the raw amino-acid sequence, 507 residues long: Archaeal-type glutamate synthase [NADPH] (507 aa).

2 consecutive 4Fe-4S ferredoxin-type domains span residues 10–39 (FVVE…YDEN) and 41–70 (NRVY…VRRN). Cysteine 19, cysteine 22, cysteine 25, cysteine 29, cysteine 50, cysteine 53, cysteine 56, and cysteine 60 together coordinate [4Fe-4S] cluster.

It belongs to the glutamate synthase family. It depends on FMN as a cofactor.

It catalyses the reaction 2 L-glutamate + NADP(+) = L-glutamine + 2-oxoglutarate + NADPH + H(+). This is Archaeal-type glutamate synthase [NADPH] from Thermotoga neapolitana (strain ATCC 49049 / DSM 4359 / NBRC 107923 / NS-E).